The sequence spans 574 residues: Lysyl oxidase homolog 1 (574 aa).

The first 25 residues, 1 to 25 (MALARGSRQLGALVWGACLCVLVHG), serve as a signal peptide directing secretion. Residues 26 to 95 (QQAQPGQGSD…RRSHGSPRRR (70 aa)) constitute a propeptide that is removed on maturation. Disordered stretches follow at residues 62–123 (VPAG…GFGQ) and 239–374 (GGEE…DLVP). The segment covering 86-96 (RRSHGSPRRRQ) has biased composition (basic residues). 2 stretches are compositionally biased toward pro residues: residues 255 to 268 (PERP…PPPD) and 313 to 332 (YANP…PPYL). The tract at residues 311–369 (PPYANPPPEAYGPPRALEPPYLPVRSSDTPPPGGERNGAQQGRLSVGSVYRPNQNGRGL) is interaction with FBLN5. The segment at 370 to 574 (PDLVPDPNYV…SATNCKIVQS (205 aa)) is lysyl-oxidase like. Disulfide bonds link Cys395/Cys401, Cys448/Cys497, Cys481/Cys487, Cys508/Cys518, and Cys555/Cys569. 3 residues coordinate Cu cation: His449, His451, and His453. The segment at residues 477–512 (KASFCLEDSTCDFGNLKRYACTSHTQGLSPGCYDTY) is a cross-link (lysine tyrosylquinone (Lys-Tyr); alternate). Tyr512 bears the 2',4',5'-topaquinone; alternate mark.

This sequence belongs to the lysyl oxidase family. Interacts (via propeptide) with EFEMP2. Interacts with FBLN5. It depends on Cu cation as a cofactor. Requires lysine tyrosylquinone residue as cofactor. The lysine tyrosylquinone cross-link (LTQ) is generated by condensation of the epsilon-amino group of a lysine with a topaquinone produced by oxidation of tyrosine. Post-translationally, proteolytic processing by a furin-like protease causes removal of N-terminal propeptide resulting in an enzyme largely inactive, but further proteolytic processing by BMP1 results in enzyme activation. In terms of tissue distribution, expressed in ocular tissues including the iris, ciliary body, lens and optic nerve. Not detected in the retina.

It localises to the secreted. The protein localises to the extracellular space. Its subcellular location is the extracellular matrix. It catalyses the reaction L-lysyl-[protein] + O2 + H2O = (S)-2-amino-6-oxohexanoyl-[protein] + H2O2 + NH4(+). In terms of biological role, catalyzes the oxidative deamination of lysine and hydroxylysine residues in collagen and elastin, resulting in the formation of covalent cross-linkages, and the stabilization of collagen and elastin fibers. Essential for the elastic fiber homeostasis and for their maintenance at adult age. In Homo sapiens (Human), this protein is Lysyl oxidase homolog 1 (LOXL1).